Here is a 187-residue protein sequence, read N- to C-terminus: Macro domain-containing protein MM_0177 (187 aa).

Residues 8–187 (VEEGIRMELN…SIKKALSKIL (180 aa)) form the Macro domain.

It belongs to the MacroD-type family.

In Methanosarcina mazei (strain ATCC BAA-159 / DSM 3647 / Goe1 / Go1 / JCM 11833 / OCM 88) (Methanosarcina frisia), this protein is Macro domain-containing protein MM_0177.